The primary structure comprises 520 residues: MAAAAAGASGLMAPALAACSSGSGGAAPGSQGVLIGDRLYSGVLITLENCLLPDDKLRFTPSMSSGLDIDTETGLRVVGCELIQAAGILLRLPQVAMATGQVLFQRFFYTKSFVKHSMEHVSMACVHLASKIEEAPRRIRDVINVFHRLRHLREKKKPVPLVLDQEYVNLKNQIIKAERRVLKELGFCVHVKHPHKIIVMYLQVLECERNQHLVQTAWNYMNDSLRTDVFVRFQPESIACACIYLAARTLEIPLPNRPHWFLLFGATEEEIQEICFKILQLYTRKKVDLTHLESEVEKRKHAIEEAKARAKGLLPPGSAPGLDSATAGFSPAPKPESPKEGKGSKSSPLSVKNAKRKMEGPKKAKGDSPVNGLLKGQESRSQSRSREQSYSRSPSRSASPKRRKSDSGSTSGGSKSQSRSRSRSDSPPRQVHRGAPYKGSEVRGSRKSKDCKHLTQKPHKSRSRSSSRSRSRSRERTDSSGKYKKKSHYYRDQRRERSRSYERTGHRYERDHPGHSRHRR.

2 cyclin-like regions span residues 81-183 (ELIQ…RVLK) and 196-280 (KIIV…KILQ). Residues 309–520 (RAKGLLPPGS…DHPGHSRHRR (212 aa)) are disordered. Serine 330, serine 337, serine 347, and serine 350 each carry phosphoserine. Over residues 356-366 (RKMEGPKKAKG) the composition is skewed to basic and acidic residues. The residue at position 368 (serine 368) is a Phosphoserine. The tract at residues 384-422 (RSREQSYSRSPSRSASPKRRKSDSGSTSGGSKSQSRSRS) is RS. Low complexity predominate over residues 407 to 429 (SGSTSGGSKSQSRSRSRSDSPPR). A compositionally biased stretch (basic and acidic residues) spans 440–453 (SEVRGSRKSKDCKH). Basic residues predominate over residues 454–471 (LTQKPHKSRSRSSSRSRS). Composition is skewed to basic and acidic residues over residues 472-481 (RSRERTDSSG) and 489-514 (YYRD…DHPG).

The protein belongs to the cyclin family. Cyclin L subfamily. Interacts with CDK11A, CDK11B, CDK12, CDK13 and POLR2A, the hyperphosphorylated C-terminal domain (CTD) of RNA polymerase II. May form a ternary complex with CDK11B and casein kinase II (CKII). Interacts with pre-mRNA-splicing factors, including at least SRSF1, SRSF2 and SRSF7/SLU7.

It localises to the nucleus speckle. It is found in the nucleus. The protein localises to the nucleoplasm. Involved in pre-mRNA splicing. May induce cell death, possibly by acting on the transcription and RNA processing of apoptosis-related factors. The sequence is that of Cyclin-L2 (Ccnl2) from Rattus norvegicus (Rat).